The following is a 348-amino-acid chain: Rhodopsin (348 aa).

Topologically, residues 1 to 33 are extracellular; sequence TEGPYFYVPMVNTTGIVRSPYEYPQYYLVNPAA. Residue Asn12 is glycosylated (N-linked (GlcNAc...) asparagine). A helical membrane pass occupies residues 34–58; it reads FAILGAYMFFLIIVGFPVNFMTLYV. Residues 59-70 are Cytoplasmic-facing; the sequence is TLEHKKLRTPLN. The helical transmembrane segment at 71 to 93 threads the bilayer; that stretch reads YILLNLAVADLFMVIGGFTTTMY. The Extracellular portion of the chain corresponds to 94–107; that stretch reads TSMHGYFVLGRLGC. Cys107 and Cys184 are joined by a disulfide. The chain crosses the membrane as a helical span at residues 108–130; that stretch reads NLEGFFATLGGMISLWSLAVLAI. The short motif at 131–133 is the 'Ionic lock' involved in activated form stabilization element; it reads ERW. Over 131 to 149 the chain is Cytoplasmic; sequence ERWVVVCKPISNFRFGENH. The helical transmembrane segment at 150–170 threads the bilayer; the sequence is AIMGVSLTWGMALACTVPPLV. Over 171-199 the chain is Extracellular; sequence GWSRYIPEGMQCSCGIDYYTRAEGFNNET. Residue Asn197 is glycosylated (N-linked (GlcNAc...) asparagine). The helical transmembrane segment at 200–221 threads the bilayer; it reads FVLYMFCCHFTVPLTIIFFCYG. At 222 to 249 the chain is on the cytoplasmic side; the sequence is RLLCAVKEAAAAQQESETTQRAEREVTR. A helical transmembrane segment spans residues 250–271; the sequence is MVVIMVIGFLVCWLPYASVAWF. The Extracellular portion of the chain corresponds to 272–283; that stretch reads VFTHQGSEFGPL. Residues 284–305 traverse the membrane as a helical segment; it reads FMTIPAFFAKSSAIYNPMIYIC. Lys293 carries the N6-(retinylidene)lysine modification. Residues 306–348 lie on the Cytoplasmic side of the membrane; that stretch reads MNKQFRHCMITTLFCGKNPFEGEEEGASSTKTEASSASSVSPA. Cys320 carries the S-palmitoyl cysteine lipid modification. The interval 327–348 is disordered; it reads GEEEGASSTKTEASSASSVSPA. Residues 332 to 348 show a composition bias toward low complexity; the sequence is ASSTKTEASSASSVSPA.

It belongs to the G-protein coupled receptor 1 family. Opsin subfamily. Phosphorylated on some or all of the serine and threonine residues present in the C-terminal region. Post-translationally, contains one covalently linked retinal chromophore.

Its subcellular location is the membrane. It is found in the cell projection. It localises to the cilium. The protein resides in the photoreceptor outer segment. Its function is as follows. Photoreceptor required for image-forming vision at low light intensity. While most salt water fish species use retinal as chromophore, most freshwater fish use 3-dehydroretinal, or a mixture of retinal and 3-dehydroretinal. Light-induced isomerization of 11-cis to all-trans retinal triggers a conformational change that activates signaling via G-proteins. Subsequent receptor phosphorylation mediates displacement of the bound G-protein alpha subunit by arrestin and terminates signaling. The protein is Rhodopsin (rho) of Sargocentron xantherythrum (Hawaiian squirrelfish).